A 363-amino-acid chain; its full sequence is 3-isopropylmalate dehydrogenase (363 aa).

79–92 (GPKWEHLPPNDQPE) is an NAD(+) binding site. Positions 100, 110, 139, and 228 each coordinate substrate. Positions 228, 252, and 256 each coordinate Mg(2+). 286 to 298 (GSAPDIAGKNIAN) lines the NAD(+) pocket.

The protein belongs to the isocitrate and isopropylmalate dehydrogenases family. LeuB type 1 subfamily. In terms of assembly, homodimer. Mg(2+) serves as cofactor. Mn(2+) is required as a cofactor.

It localises to the cytoplasm. The catalysed reaction is (2R,3S)-3-isopropylmalate + NAD(+) = 4-methyl-2-oxopentanoate + CO2 + NADH. The protein operates within amino-acid biosynthesis; L-leucine biosynthesis; L-leucine from 3-methyl-2-oxobutanoate: step 3/4. Catalyzes the oxidation of 3-carboxy-2-hydroxy-4-methylpentanoate (3-isopropylmalate) to 3-carboxy-4-methyl-2-oxopentanoate. The product decarboxylates to 4-methyl-2 oxopentanoate. In Vibrio parahaemolyticus serotype O3:K6 (strain RIMD 2210633), this protein is 3-isopropylmalate dehydrogenase.